A 644-amino-acid chain; its full sequence is Chaperone protein HtpG (644 aa).

The segment at 1 to 352 (MNARVEQLEF…AQDMSLNVSR (352 aa)) is a; substrate-binding. Residues 353-566 (EILQQDRQIK…AFGITPALAR (214 aa)) are b. The interval 567 to 644 (LYRASGQDIP…ILADRLARTL (78 aa)) is c.

This sequence belongs to the heat shock protein 90 family. As to quaternary structure, homodimer.

The protein localises to the cytoplasm. Its function is as follows. Molecular chaperone. Has ATPase activity. The sequence is that of Chaperone protein HtpG from Mycobacterium avium (strain 104).